A 171-amino-acid polypeptide reads, in one-letter code: MPLLDSFTVDHTRMAAPAVRVAKTMKTPHGDNITVFDLRFCRPNIEVMPERGIHTLEHLFAGFMRDHLNGDGVEIIDISPMGCRTGFYMSLIGTPDEQRVADSWKAAMADVLKVTDQRKIPELNEFQCGTYEMHSLKEAQEIAQHIVDSDIGINQNDDLALPKDKLAELHI.

Fe cation-binding residues include His-54, His-58, and Cys-128.

It belongs to the LuxS family. As to quaternary structure, homodimer. Fe cation serves as cofactor.

The catalysed reaction is S-(5-deoxy-D-ribos-5-yl)-L-homocysteine = (S)-4,5-dihydroxypentane-2,3-dione + L-homocysteine. In terms of biological role, involved in the synthesis of autoinducer 2 (AI-2) which is secreted by bacteria and is used to communicate both the cell density and the metabolic potential of the environment. The regulation of gene expression in response to changes in cell density is called quorum sensing. Catalyzes the transformation of S-ribosylhomocysteine (RHC) to homocysteine (HC) and 4,5-dihydroxy-2,3-pentadione (DPD). The sequence is that of S-ribosylhomocysteine lyase from Pectobacterium carotovorum subsp. carotovorum (strain PC1).